The chain runs to 503 residues: Anthranilate synthase component 1 3 (503 aa).

L-tryptophan is bound at residue 269-271 (PYS). Residue 304–305 (GT) participates in chorismate binding. Position 331 (Glu-331) interacts with Mg(2+). Chorismate contacts are provided by residues Tyr-419, Arg-439, 453-455 (GSG), and Gly-455. Residue Glu-468 coordinates Mg(2+).

Belongs to the anthranilate synthase component I family. Tetramer of two components I and two components II. It depends on Mg(2+) as a cofactor.

The enzyme catalyses chorismate + L-glutamine = anthranilate + pyruvate + L-glutamate + H(+). It functions in the pathway amino-acid biosynthesis; L-tryptophan biosynthesis; L-tryptophan from chorismate: step 1/5. The chain is Anthranilate synthase component 1 3 (trpE3) from Haloarcula marismortui (strain ATCC 43049 / DSM 3752 / JCM 8966 / VKM B-1809) (Halobacterium marismortui).